We begin with the raw amino-acid sequence, 1542 residues long: ABC multidrug transporter AFR1 (1542 aa).

2 disordered regions span residues 1–84 (MSAA…LPAD) and 118–141 (SQQSQHELHRPTTRHSIRSSFSRK). Residues 18-41 (TATTQNPSGLANSQVTSDPVPSAT) show a composition bias toward polar residues. A compositionally biased stretch (basic and acidic residues) spans 60 to 69 (DKSVDAEKVE). Residues N207 and N397 are each glycosylated (N-linked (GlcNAc...) asparagine). The region spanning 221-473 (LKVLGIFGVN…MIGLGYRDLP (253 aa)) is the ABC transporter 1 domain. Helical transmembrane passes span 584 to 604 (FGISTGYATSIIIALIVGSVY), 618 to 638 (GGLLFLGLLFNALTSFSELPS), 669 to 689 (VPYNASVIFLFSIVLYFMGGL), 694 to 714 (GAFFIFYLFVFLTFMVMSAFF), and 726 to 746 (VAARLASVLISFMVTYTGYMI). N822 is a glycosylation site (N-linked (GlcNAc...) asparagine). The helical transmembrane segment at 844–864 (FGILVGFFAFFMFLQMMFIEY) threads the bilayer. Residues 917-1159 (FTWEGLNYTV…VLIDYLERNG (243 aa)) enclose the ABC transporter 2 domain. N923 is a glycosylation site (N-linked (GlcNAc...) asparagine). Residue 953-960 (GASGAGKT) participates in ATP binding. The next 6 membrane-spanning stretches (helical) occupy residues 1253–1273 (WTRLFAHLAIGLIVTLTFLQL), 1284–1304 (VFAIFFATVLPALILAQIEPQ), 1335–1355 (MPYSLGCAVSFFLLLYYGVGF), 1365–1385 (FFLMILVTEIYAVTLGQAVAA), 1390–1410 (ILIAALFNPFLLVLFSIFCGV), and 1516–1536 (FGIFICYVVFNILVLLIAARF).

Belongs to the ABC transporter superfamily. ABCG family. PDR (TC 3.A.1.205) subfamily.

It is found in the cell membrane. The enzyme catalyses itraconazole(in) + ATP + H2O = itraconazole(out) + ADP + phosphate + H(+). It carries out the reaction voriconazole(in) + ATP + H2O = voriconazole(out) + ADP + phosphate + H(+). It catalyses the reaction fluconazole(in) + ATP + H2O = fluconazole(out) + ADP + phosphate + H(+). Major pleiotropic ABC efflux transporter that confers resistance to structurally and functionally unrelated compounds including azoles such as fluconazole (FLC), itraconazole (ITC), posaconazole (POS), and voriconazole (VRC). Is also able to efflux the eukaryote protein synthesis inhibitor cycloheximide (CHX). In Cryptococcus deuterogattii (strain R265) (Cryptococcus gattii VGII (strain R265)), this protein is ABC multidrug transporter AFR1.